The primary structure comprises 726 residues: L-lysine 6-oxidase (726 aa).

A cross-link (4'-cysteinyl-tryptophylquinone (Cys-Trp)) is located at residues 516 to 581 (CTIQTVNFSE…LPPAYYSYWW (66 aa)). Residue Trp581 is modified to Tryptophylquinone.

Homotetramer. The cofactor is cysteine tryptophylquinone residue. In terms of processing, the cysteine tryptophylquinone (CTQ) is generated by oxidation of the indole ring of a tryptophan residue to form tryptophylquinone, followed by covalent cross-linking with a cysteine residue.

The protein localises to the secreted. The enzyme catalyses L-lysine + O2 + H2O = (S)-2-amino-6-oxohexanoate + H2O2 + NH4(+). Inhibited by aminoguanidine, amiloride and beta-aminopropionitrile. Has antibacterial activity against a wide spectrum of Gram-positive and Gram-negative bacteria including nosocomial isolates of S.aureus and Pseudomonas sp. The antimicrobial activity is due to hydrogen peroxide generated by its lysine oxidase activity. Also has autotoxic activity. Involved in biofilm differentiation; responsible for cell death within microcolonies during biofilm development which is linked to the generation of a phenotypically diverse dispersal population and thus may play a role in colonization. This is L-lysine 6-oxidase (lodA) from Marinomonas mediterranea (strain ATCC 700492 / JCM 21426 / NBRC 103028 / MMB-1).